A 110-amino-acid chain; its full sequence is uncharacterized protein (110 aa).

Residues serine 86–phenylalanine 110 are disordered. Positions lysine 95 to proline 104 are enriched in basic residues.

This is an uncharacterized protein from Arabidopsis thaliana (Mouse-ear cress).